A 196-amino-acid chain; its full sequence is Mitochondrial inner membrane protein SHH3 (196 aa).

The transit peptide at 1–53 (MKATIQRVTSVFGVPRASVFVPRISTPFILHNYISNGRMDLFSKEFHNGRVSK) directs the protein to the mitochondrion. Over 54–97 (SDLWSSNKEEELLVSQRKKRPISPHLTVYEPEMSWYLSSLHRIS) the chain is Mitochondrial matrix. Residues Ser-91 and Arg-95 each contribute to the a ubiquinone site. Residues 98–118 (GVLLALGFYAFTITLGVTTIM) form a helical membrane-spanning segment. Over 119 to 137 (GMDTTFQDLNKWYHEKMPK) the chain is Mitochondrial intermembrane. The chain crosses the membrane as a helical span at residues 138-160 (WSQWVAKGSAAYLFAFHFGNGIR). Heme is bound at residue His-154. Residues 161–174 (HLIWDMGYELTNRG) are Mitochondrial matrix-facing. A helical transmembrane segment spans residues 175 to 195 (VIKTGSIVLAGTLVLGTYLLA). Gln-196 is a topological domain (mitochondrial intermembrane).

Belongs to the cytochrome b560 family.

The protein resides in the mitochondrion inner membrane. Functionally, homolog of SDH3, but seems not to be a stoichiometric subunit of either the succinate dehydrogenase (SDH) complex or the mitochondrial inner membrane translocase TIM22 complex. The protein is Mitochondrial inner membrane protein SHH3 of Saccharomyces cerevisiae (strain ATCC 204508 / S288c) (Baker's yeast).